Consider the following 288-residue polypeptide: Sulfur carrier protein FdhD (288 aa).

Cys-122 acts as the Cysteine persulfide intermediate in catalysis. Phe-268–Arg-273 serves as a coordination point for Mo-bis(molybdopterin guanine dinucleotide).

It belongs to the FdhD family.

The protein localises to the cytoplasm. Required for formate dehydrogenase (FDH) activity. Acts as a sulfur carrier protein that transfers sulfur from IscS to the molybdenum cofactor prior to its insertion into FDH. This chain is Sulfur carrier protein FdhD, found in Anaeromyxobacter sp. (strain K).